A 436-amino-acid polypeptide reads, in one-letter code: Adenylosuccinate synthetase (436 aa).

GTP contacts are provided by residues 12–18 (GDEGKGK) and 40–42 (GHT). Residue aspartate 13 is the Proton acceptor of the active site. Positions 13 and 40 each coordinate Mg(2+). Residues 13–16 (DEGK), 38–41 (NAGH), threonine 128, arginine 142, glutamine 223, threonine 238, and arginine 302 each bind IMP. The active-site Proton donor is the histidine 41. 298 to 304 (TTTGRRR) is a substrate binding site. GTP contacts are provided by residues arginine 304, 330-332 (KLD), and 412-414 (SLG).

This sequence belongs to the adenylosuccinate synthetase family. In terms of assembly, homodimer. Mg(2+) is required as a cofactor.

The protein localises to the cytoplasm. The catalysed reaction is IMP + L-aspartate + GTP = N(6)-(1,2-dicarboxyethyl)-AMP + GDP + phosphate + 2 H(+). The protein operates within purine metabolism; AMP biosynthesis via de novo pathway; AMP from IMP: step 1/2. In terms of biological role, plays an important role in the de novo pathway of purine nucleotide biosynthesis. Catalyzes the first committed step in the biosynthesis of AMP from IMP. The sequence is that of Adenylosuccinate synthetase from Prochlorococcus marinus (strain MIT 9312).